Reading from the N-terminus, the 1055-residue chain is DIS3-like exonuclease 2 (1055 aa).

Disordered stretches follow at residues 1–109 (MKSA…SSPE) and 229–249 (SAAK…KARQ). Residues 17–32 (HKKKRNRPQKQNRRSK) show a composition bias toward basic residues. A compositionally biased stretch (basic and acidic residues) spans 39–59 (EDAHVEESLDGRDSSRSKAKD). The span at 97–108 (PRRSASPLLSSP) shows a compositional bias: low complexity. Aspartate 488 and aspartate 497 together coordinate Mg(2+).

It belongs to the RNR ribonuclease family. DIS3L2 subfamily. Mg(2+) serves as cofactor. Mn(2+) is required as a cofactor. As to expression, widely expressed.

It is found in the cytoplasm. The protein localises to the P-body. In terms of biological role, 3'-5'-exoribonuclease that specifically recognizes RNAs polyuridylated at their 3' end and mediates their degradation. Component of an exosome-independent RNA degradation pathway that mediates degradation of cytoplasmic mRNAs that have been deadenylated and subsequently uridylated at their 3'. This Arabidopsis thaliana (Mouse-ear cress) protein is DIS3-like exonuclease 2 (SOV).